The chain runs to 504 residues: Glycerol kinase (504 aa).

T12 contributes to the ADP binding site. The ATP site is built by T12, T13, and S14. T12 lines the sn-glycerol 3-phosphate pocket. R16 is an ADP binding site. Residues R82, E83, Y134, and D246 each coordinate sn-glycerol 3-phosphate. Positions 82, 83, 134, 246, and 247 each coordinate glycerol. Residues T268 and G312 each coordinate ADP. 4 residues coordinate ATP: T268, G312, Q316, and G413. 2 residues coordinate ADP: G413 and N417.

The protein belongs to the FGGY kinase family.

The catalysed reaction is glycerol + ATP = sn-glycerol 3-phosphate + ADP + H(+). It functions in the pathway polyol metabolism; glycerol degradation via glycerol kinase pathway; sn-glycerol 3-phosphate from glycerol: step 1/1. Inhibited by fructose 1,6-bisphosphate (FBP). In terms of biological role, key enzyme in the regulation of glycerol uptake and metabolism. Catalyzes the phosphorylation of glycerol to yield sn-glycerol 3-phosphate. The sequence is that of Glycerol kinase from Renibacterium salmoninarum (strain ATCC 33209 / DSM 20767 / JCM 11484 / NBRC 15589 / NCIMB 2235).